Consider the following 84-residue polypeptide: NADH-ubiquinone oxidoreductase chain 4L (84 aa).

A run of 2 helical transmembrane segments spans residues 19 to 39 (ITLL…LIHI) and 50 to 70 (IFSL…LSIL).

The protein belongs to the complex I subunit 4L family.

The protein localises to the mitochondrion membrane. The enzyme catalyses a ubiquinone + NADH + 5 H(+)(in) = a ubiquinol + NAD(+) + 4 H(+)(out). In terms of biological role, core subunit of the mitochondrial membrane respiratory chain NADH dehydrogenase (Complex I) that is believed to belong to the minimal assembly required for catalysis. Complex I functions in the transfer of electrons from NADH to the respiratory chain. The immediate electron acceptor for the enzyme is believed to be ubiquinone. This is NADH-ubiquinone oxidoreductase chain 4L (NAD4L) from Candida albicans (strain SC5314 / ATCC MYA-2876) (Yeast).